We begin with the raw amino-acid sequence, 427 residues long: Adenylosuccinate synthetase (427 aa).

GTP-binding positions include 12-18 and 40-42; these read GDEGKGK and GHT. The active-site Proton acceptor is aspartate 13. The Mg(2+) site is built by aspartate 13 and glycine 40. IMP-binding positions include 13–16, 38–41, threonine 128, arginine 142, glutamine 223, threonine 238, and arginine 302; these read DEGK and NAGH. Catalysis depends on histidine 41, which acts as the Proton donor. 298-304 lines the substrate pocket; sequence TTTGRPR. GTP-binding positions include arginine 304, 330–332, and 412–414; these read SID and SVG.

This sequence belongs to the adenylosuccinate synthetase family. Homodimer. The cofactor is Mg(2+).

The protein localises to the cytoplasm. It catalyses the reaction IMP + L-aspartate + GTP = N(6)-(1,2-dicarboxyethyl)-AMP + GDP + phosphate + 2 H(+). It functions in the pathway purine metabolism; AMP biosynthesis via de novo pathway; AMP from IMP: step 1/2. Plays an important role in the de novo pathway of purine nucleotide biosynthesis. Catalyzes the first committed step in the biosynthesis of AMP from IMP. The chain is Adenylosuccinate synthetase from Staphylococcus epidermidis (strain ATCC 35984 / DSM 28319 / BCRC 17069 / CCUG 31568 / BM 3577 / RP62A).